We begin with the raw amino-acid sequence, 146 residues long: Large ribosomal subunit protein uL13 (146 aa).

Residues 125 to 146 (YAGPKHPHAAQQPKVYEPRPRG) are disordered.

Belongs to the universal ribosomal protein uL13 family. Part of the 50S ribosomal subunit.

In terms of biological role, this protein is one of the early assembly proteins of the 50S ribosomal subunit, although it is not seen to bind rRNA by itself. It is important during the early stages of 50S assembly. In Roseiflexus sp. (strain RS-1), this protein is Large ribosomal subunit protein uL13.